Here is a 47-residue protein sequence, read N- to C-terminus: Photosystem II reaction center protein K (47 aa).

A propeptide spanning residues Met-1 to Ala-10 is cleaved from the precursor. The chain crosses the membrane as a helical span at residues Phe-19–Val-39.

This sequence belongs to the PsbK family. In terms of assembly, PSII is composed of 1 copy each of membrane proteins PsbA, PsbB, PsbC, PsbD, PsbE, PsbF, PsbH, PsbI, PsbJ, PsbK, PsbL, PsbM, PsbT, PsbX, PsbY, PsbZ, Psb30/Ycf12, peripheral proteins PsbO, CyanoQ (PsbQ), PsbU, PsbV and a large number of cofactors. It forms dimeric complexes.

It localises to the cellular thylakoid membrane. Functionally, one of the components of the core complex of photosystem II (PSII). PSII is a light-driven water:plastoquinone oxidoreductase that uses light energy to abstract electrons from H(2)O, generating O(2) and a proton gradient subsequently used for ATP formation. It consists of a core antenna complex that captures photons, and an electron transfer chain that converts photonic excitation into a charge separation. The protein is Photosystem II reaction center protein K of Parasynechococcus marenigrum (strain WH8102).